The primary structure comprises 111 residues: Cytochrome c3, 26 kDa (111 aa).

Positions 30, 33, 38, 41, 42, 43, 54, 59, 60, 77, 86, 89, 90, 105, 108, and 109 each coordinate heme c.

In terms of assembly, homodimer. Heme c is required as a cofactor.

Its subcellular location is the periplasm. Functionally, participates in sulfate respiration coupled with phosphorylation by transferring electrons from the enzyme dehydrogenase to ferredoxin. The protein is Cytochrome c3, 26 kDa of Desulfomicrobium norvegicum (strain DSM 1741 / NCIMB 8310) (Desulfovibrio baculatus (strain Norway 4)).